A 258-amino-acid polypeptide reads, in one-letter code: UPF0758 protein Bcep1808_2579 (258 aa).

The MPN domain occupies 136–258 (PIDSPGAVED…TFSFARAGWL (123 aa)). Residues His207, His209, and Asp220 each contribute to the Zn(2+) site. Positions 207-220 (HNHPSGAVQPSAED) match the JAMM motif motif.

Belongs to the UPF0758 family.

The polypeptide is UPF0758 protein Bcep1808_2579 (Burkholderia vietnamiensis (strain G4 / LMG 22486) (Burkholderia cepacia (strain R1808))).